The chain runs to 500 residues: Glucose-1-phosphate adenylyltransferase small subunit 1, chloroplastic/amyloplastic (500 aa).

The N-terminal 50 residues, 1-50 (MAMMAMGAASWAPIPAPARAAAAFYPGRDLAAARRRRGAAARRPFVFTPR), are a transit peptide targeting the chloroplast.

Belongs to the bacterial/plant glucose-1-phosphate adenylyltransferase family. As to quaternary structure, heterotetramer composed of two small and two large subunits. Expressed in leaves.

It localises to the plastid. The protein resides in the chloroplast. It is found in the amyloplast. The catalysed reaction is alpha-D-glucose 1-phosphate + ATP + H(+) = ADP-alpha-D-glucose + diphosphate. It participates in glycan biosynthesis; starch biosynthesis. Activated by 3'phosphoglycerate, inhibited by orthophosphate. Allosteric regulation. Its function is as follows. Involved in synthesis of starch. Catalyzes the synthesis of ADP-glucose, a molecule that serves as an activated glycosyl donor for alpha-1,4-glucan synthesis. Essential for starch synthesis in leaf chloroplasts and endosperm amyloplasts. The sequence is that of Glucose-1-phosphate adenylyltransferase small subunit 1, chloroplastic/amyloplastic from Oryza sativa subsp. japonica (Rice).